The following is a 482-amino-acid chain: tRNA sulfurtransferase (482 aa).

Residues 61-165 (PVIADALTRI…NDKLMLVKAR (105 aa)) form the THUMP domain. ATP is bound by residues 183–184 (LI), Lys265, Gly287, and Gln296. A disulfide bridge links Cys344 with Cys456. Residues 404-482 (FDADQVILDI…GFTNVKVYRP (79 aa)) form the Rhodanese domain. The active-site Cysteine persulfide intermediate is the Cys456.

This sequence belongs to the ThiI family.

It is found in the cytoplasm. It catalyses the reaction [ThiI sulfur-carrier protein]-S-sulfanyl-L-cysteine + a uridine in tRNA + 2 reduced [2Fe-2S]-[ferredoxin] + ATP + H(+) = [ThiI sulfur-carrier protein]-L-cysteine + a 4-thiouridine in tRNA + 2 oxidized [2Fe-2S]-[ferredoxin] + AMP + diphosphate. It carries out the reaction [ThiS sulfur-carrier protein]-C-terminal Gly-Gly-AMP + S-sulfanyl-L-cysteinyl-[cysteine desulfurase] + AH2 = [ThiS sulfur-carrier protein]-C-terminal-Gly-aminoethanethioate + L-cysteinyl-[cysteine desulfurase] + A + AMP + 2 H(+). It participates in cofactor biosynthesis; thiamine diphosphate biosynthesis. In terms of biological role, catalyzes the ATP-dependent transfer of a sulfur to tRNA to produce 4-thiouridine in position 8 of tRNAs, which functions as a near-UV photosensor. Also catalyzes the transfer of sulfur to the sulfur carrier protein ThiS, forming ThiS-thiocarboxylate. This is a step in the synthesis of thiazole, in the thiamine biosynthesis pathway. The sulfur is donated as persulfide by IscS. This is tRNA sulfurtransferase from Serratia proteamaculans (strain 568).